Consider the following 153-residue polypeptide: Myosin regulatory light chain, smooth muscle (153 aa).

EF-hand domains follow at residues 12 to 47, 81 to 116, and 117 to 152; these read SQIQEFKEAFTMIDANRDGFIDQEDLKDTYASLGRG, DPEETILEAFKILDADNKGVINKNYLAEIMMTQADR, and FSQSEVNQMFDISPIDVAGNLDYKSLCYIITHGQEE. Positions 25, 27, 29, and 36 each coordinate Ca(2+).

In terms of biological role, in molluscan muscle, calcium regulation is associated with myosin rather than with actin. Muscle myosin contains two types of light chains: the catalytic light chain, essential for ATPase activity, and the regulatory light chain, a calcium-binding protein responsible for Ca(2+) dependent binding and Ca(2+) dependent Mg-ATPase activity. The protein is Myosin regulatory light chain, smooth muscle of Halocynthia roretzi (Sea squirt).